Consider the following 1555-residue polypeptide: Protein TASOR (1555 aa).

Disordered regions lie at residues 1–74 (MEEN…DKRA), 645–711 (QKKK…RQET), 744–773 (QNST…GQDQ), 870–911 (ALPN…TTPS), and 1390–1462 (NQGD…PTLD). The span at 35 to 47 (VQQTLKRTNSTES) shows a compositional bias: polar residues. A compositionally biased stretch (basic residues) spans 61 to 71 (RRFQIPRKSRD). Basic and acidic residues predominate over residues 667-688 (DRQSEKAWKHRKCEENVHHDNE). Polar residues-rich tracts occupy residues 692 to 702 (SAQSLISSLGG) and 744 to 761 (QNST…LSQA). The span at 888 to 904 (PLHETERQRPRHDRDYC) shows a compositional bias: basic and acidic residues. Residues 1402–1417 (SKEEEDMSLDSEDDTP) show a composition bias toward acidic residues. Positions 1448–1458 (ESPSTLNQGKT) are enriched in polar residues.

This sequence belongs to the TASOR family. In terms of assembly, component of the HUSH complex.

It localises to the nucleus. The protein resides in the chromosome. Its function is as follows. Component of the HUSH complex, a multiprotein complex that mediates epigenetic repression. The HUSH complex is recruited to genomic loci rich in H3K9me3 and is probably required to maintain transcriptional silencing by promoting further deposition of H3K9me3. In Xenopus laevis (African clawed frog), this protein is Protein TASOR.